Here is a 495-residue protein sequence, read N- to C-terminus: Growth/differentiation factor 5 (495 aa).

Residues 1–27 (MRLPKLLTLLLWHLAWLDLELICTVLG) form the signal peptide. Residues 28–375 (APDLGQRTPG…YLFSQRRKRR (348 aa)) constitute a propeptide that is removed on maturation. The tract at residues 30 to 162 (DLGQRTPGAK…KEPFRPPPIT (133 aa)) is disordered. Residues 124–137 (GGKASSKAGSAPSS) are compositionally biased toward low complexity. Residues 142 to 156 (KTREPGTPREPKEPF) are compositionally biased toward basic and acidic residues. N-linked (GlcNAc...) asparagine glycosylation is present at Asn183. Disulfide bonds link Cys394-Cys460, Cys423-Cys492, and Cys427-Cys494.

The protein belongs to the TGF-beta family. Homodimer; disulfide-linked. Interacts with serine proteases, HTRA1 and HTRA3. Following LPS binding, may form a complex with CXCR4, HSP90AA1 and HSPA8. Interacts with high affinity with NOG; inhibits chondrogenesis. Interacts with high affinity with BMPR1B and lower affinity with BMPR1A; positively regulates chondrocyte differentiation and induces SMAD-dependent signaling. Interacts with FBN1 (via N-terminal domain) and FBN2. Interacts with TGFBR3.

Its subcellular location is the secreted. The protein localises to the cell membrane. In terms of biological role, growth factor involved in bone and cartilage formation. During cartilage development regulates differentiation of chondrogenic tissue through two pathways. Firstly, positively regulates differentiation of chondrogenic tissue through its binding of high affinity with BMPR1B and of less affinity with BMPR1A, leading to induction of SMAD1-SMAD5-SMAD8 complex phosphorylation and then SMAD protein signaling transduction. Secondly, negatively regulates chondrogenic differentiation through its interaction with NOG. Required to prevent excessive muscle loss upon denervation. This function requires SMAD4 and is mediated by phosphorylated SMAD1/5/8. Binds bacterial lipopolysaccharide (LPS) and mediates LPS-induced inflammatory response, including TNF secretion by monocytes. The sequence is that of Growth/differentiation factor 5 (Gdf5) from Mus musculus (Mouse).